A 232-amino-acid polypeptide reads, in one-letter code: Lipoprotein-releasing system ATP-binding protein LolD (232 aa).

Residues 11-231 (VYLHDIRRQY…SLENGHVVEL (221 aa)) enclose the ABC transporter domain. 47–54 (APSGSGKS) provides a ligand contact to ATP.

This sequence belongs to the ABC transporter superfamily. Lipoprotein translocase (TC 3.A.1.125) family. The complex is composed of two ATP-binding proteins (LolD) and two transmembrane proteins (LolC and LolE).

The protein resides in the cell inner membrane. Functionally, part of the ABC transporter complex LolCDE involved in the translocation of mature outer membrane-directed lipoproteins, from the inner membrane to the periplasmic chaperone, LolA. Responsible for the formation of the LolA-lipoprotein complex in an ATP-dependent manner. The protein is Lipoprotein-releasing system ATP-binding protein LolD of Nitrobacter hamburgensis (strain DSM 10229 / NCIMB 13809 / X14).